A 140-amino-acid chain; its full sequence is Nucleoside diphosphate kinase (140 aa).

6 residues coordinate ATP: K11, F59, R87, T93, R104, and N114. Catalysis depends on H117, which acts as the Pros-phosphohistidine intermediate.

The protein belongs to the NDK family. As to quaternary structure, homotetramer. Mg(2+) is required as a cofactor.

Its subcellular location is the cytoplasm. It carries out the reaction a 2'-deoxyribonucleoside 5'-diphosphate + ATP = a 2'-deoxyribonucleoside 5'-triphosphate + ADP. The catalysed reaction is a ribonucleoside 5'-diphosphate + ATP = a ribonucleoside 5'-triphosphate + ADP. Functionally, major role in the synthesis of nucleoside triphosphates other than ATP. The ATP gamma phosphate is transferred to the NDP beta phosphate via a ping-pong mechanism, using a phosphorylated active-site intermediate. The polypeptide is Nucleoside diphosphate kinase (Methylobacterium radiotolerans (strain ATCC 27329 / DSM 1819 / JCM 2831 / NBRC 15690 / NCIMB 10815 / 0-1)).